Here is a 351-residue protein sequence, read N- to C-terminus: Mediator of RNA polymerase II transcription subunit 18 (351 aa).

The tract at residues 153-231 (GNGDPIDIDT…LPQSLSNGVS (79 aa)) is disordered. The span at 163–204 (NNDKQGDNNTDKPKQEHDGKLPEAIDEDIIKNGDEKKTTHDD) shows a compositional bias: basic and acidic residues. Acidic residues predominate over residues 205 to 216 (NDSDIMEIDEPN). The span at 217 to 231 (PETQTLPQSLSNGVS) shows a compositional bias: polar residues.

The protein belongs to the Mediator complex subunit 18 family. Component of the Mediator complex.

It localises to the nucleus. Functionally, component of the Mediator complex, a coactivator involved in the regulated transcription of nearly all RNA polymerase II-dependent genes. Mediator functions as a bridge to convey information from gene-specific regulatory proteins to the basal RNA polymerase II transcription machinery. Mediator is recruited to promoters by direct interactions with regulatory proteins and serves as a scaffold for the assembly of a functional preinitiation complex with RNA polymerase II and the general transcription factors. The polypeptide is Mediator of RNA polymerase II transcription subunit 18 (SRB5) (Candida albicans (strain SC5314 / ATCC MYA-2876) (Yeast)).